The chain runs to 393 residues: Sulfite oxidase (393 aa).

Positions 1–27 (MPGIRGPSEYSQEPPRHPSLKVNAKEP) are disordered. The moco domain stretch occupies residues 10-242 (YSQEPPRHPS…QGFFMQKDYK (233 aa)). Mo-molybdopterin-binding positions include 49–53 (YKRNH), Cys98, 159–161 (SVD), His202, Arg207, and 218–220 (SVK). The interval 243-393 (MFPPSVNWDN…VLLRLGHSNL (151 aa)) is homodimerization. The short motif at 391-393 (SNL) is the Microbody targeting signal element.

Predominantly monomer; also homodimer. Mo-molybdopterin is required as a cofactor.

It localises to the peroxisome. It catalyses the reaction sulfite + O2 + H2O = sulfate + H2O2. The protein operates within energy metabolism; sulfur metabolism. Functionally, probably involved in sulfite oxidative detoxification. The protein is Sulfite oxidase (SOX) of Arabidopsis thaliana (Mouse-ear cress).